The chain runs to 239 residues: Large ribosomal subunit protein uL1 (239 aa).

It belongs to the universal ribosomal protein uL1 family. Part of the 50S ribosomal subunit.

Its function is as follows. Binds directly to 23S rRNA. The L1 stalk is quite mobile in the ribosome, and is involved in E site tRNA release. Protein L1 is also a translational repressor protein, it controls the translation of the L11 operon by binding to its mRNA. The polypeptide is Large ribosomal subunit protein uL1 (Acidothermus cellulolyticus (strain ATCC 43068 / DSM 8971 / 11B)).